Consider the following 390-residue polypeptide: Cytochrome b (390 aa).

4 consecutive transmembrane segments (helical) span residues 32-52 (MGSL…FMAM), 76-98 (WFLR…IHMG), 113-133 (LWTI…LGYC), and 179-199 (FFAL…MHMM). 2 residues coordinate heme b: histidine 82 and histidine 96. Residues histidine 183 and histidine 197 each contribute to the heme b site. Histidine 202 lines the a ubiquinone pocket. A run of 4 helical transmembrane segments spans residues 225-245 (FVFK…LFVF), 289-309 (LMGV…PFTD), 321-341 (LSKL…QIGA), and 348-368 (YILM…VFIP).

It belongs to the cytochrome b family. Fungal cytochrome b-c1 complex contains 10 subunits; 3 respiratory subunits, 2 core proteins and 5 low-molecular weight proteins. Cytochrome b-c1 complex is a homodimer. The cofactor is heme b.

The protein resides in the mitochondrion inner membrane. Functionally, component of the ubiquinol-cytochrome c reductase complex (complex III or cytochrome b-c1 complex) that is part of the mitochondrial respiratory chain. The b-c1 complex mediates electron transfer from ubiquinol to cytochrome c. Contributes to the generation of a proton gradient across the mitochondrial membrane that is then used for ATP synthesis. The protein is Cytochrome b (COB) of Naumovozyma castellii (Yeast).